Here is a 74-residue protein sequence, read N- to C-terminus: UPF0352 protein HAPS_0210 (74 aa).

It belongs to the UPF0352 family.

The polypeptide is UPF0352 protein HAPS_0210 (Glaesserella parasuis serovar 5 (strain SH0165) (Haemophilus parasuis)).